The chain runs to 107 residues: UPF0213 protein SG0387 (107 aa).

Residues 4-79 (SLWHLYLIRT…KQLSRAQKEH (76 aa)) form the GIY-YIG domain.

Belongs to the UPF0213 family.

This is UPF0213 protein SG0387 from Sodalis glossinidius (strain morsitans).